The primary structure comprises 365 residues: Fatty acid hydroxylase vlmA (365 aa).

Residues 20 to 41 form a disordered region; that stretch reads TTIKRRQNDKTKTPKTKPVSKI. Residue Asn47 is glycosylated (N-linked (GlcNAc...) asparagine). The next 4 membrane-spanning stretches (helical) occupy residues 62-82, 89-109, 144-164, and 179-199; these read ILLQ…VLSI, VHPF…FRFL, LNWS…LVAY, and WWAW…FYYY. The region spanning 189 to 335 is the Fatty acid hydroxylase domain; sequence LYPIILDFYY…TRIWDRLFGT (147 aa).

This sequence belongs to the sterol desaturase family. TMEM195 subfamily.

The protein localises to the membrane. It participates in secondary metabolite biosynthesis. In terms of biological role, fatty acid hydroxylase; part of the gene cluster that mediates the biosynthesis of verlamelin, a lipopeptide that exhibits antifungal activity against plant pathogenic fungi. Verlamelin is a cyclic hexadepsipeptide and is bridged by ester bonding between a 5-hydroxytetradecanoic acid moiety and a carboxyl group on the terminal Val of amide-bonded tetradecanoyl-hexapeptide D-allo-Thr-D-Ala-L-Pro-L-Gln-D-Tyr-L-Val. VlmA and vlmB are altogether regarded as essential components in the biosynthesis of 5-hydroxytetradecanoic acid. VlmA catalyzes the hydroxylation at position C5 of tetradecanoic acid produced in primary metabolism, while the precise function of vlmB still remains to be solved. To be loaded onto the waiting NRPS, 5-hydroxytetradecanoic acid is activated in the form of acyladenylate by the AMP-dependent ligase vlmC. VlmS seems to accept the fatty-acyl intermediate onto the initial module to further elongate amino acid residues by the downstream modules. In addition, in the last module at its C-terminus, vlmS contains a surplus condensation (C) domain that may be involved in cyclization, the last step to form verlamelin. In Lecanicillium sp, this protein is Fatty acid hydroxylase vlmA.